The chain runs to 149 residues: MERTYVMVKPDGVQRCLVGEIVSRIEKKGLKIAALRMNVMTEAAAKEHYKEHSERPFFGSLVSFVTSGPSVSMVIEGNNAIKIMRAINGATNPVDALPGTIRGDLAVDMGRNVVHASDAPESAEREIGLHFEESEISGYPRADDEWLYE.

Positions 9, 57, 85, 91, 102, and 112 each coordinate ATP. H115 functions as the Pros-phosphohistidine intermediate in the catalytic mechanism.

It belongs to the NDK family. It depends on Mg(2+) as a cofactor.

It localises to the cytoplasm. The enzyme catalyses a 2'-deoxyribonucleoside 5'-diphosphate + ATP = a 2'-deoxyribonucleoside 5'-triphosphate + ADP. It carries out the reaction a ribonucleoside 5'-diphosphate + ATP = a ribonucleoside 5'-triphosphate + ADP. Its function is as follows. Major role in the synthesis of nucleoside triphosphates other than ATP. The ATP gamma phosphate is transferred to the NDP beta phosphate via a ping-pong mechanism, using a phosphorylated active-site intermediate. This chain is Nucleoside diphosphate kinase, found in Methanococcoides burtonii (strain DSM 6242 / NBRC 107633 / OCM 468 / ACE-M).